The primary structure comprises 403 residues: Phosphoglycerate kinase (403 aa).

Substrate is bound by residues 21-23 (DFN), Arg-36, 59-62 (HLGR), Arg-119, and Arg-159. ATP is bound by residues Lys-214, Gly-301, Glu-332, and 359–362 (GGDS).

Belongs to the phosphoglycerate kinase family. In terms of assembly, monomer.

Its subcellular location is the cytoplasm. It carries out the reaction (2R)-3-phosphoglycerate + ATP = (2R)-3-phospho-glyceroyl phosphate + ADP. The protein operates within carbohydrate degradation; glycolysis; pyruvate from D-glyceraldehyde 3-phosphate: step 2/5. The protein is Phosphoglycerate kinase of Lactobacillus helveticus (strain DPC 4571).